An 89-amino-acid polypeptide reads, in one-letter code: Mu-like prophage FluMu DNA-binding protein Ner (89 aa).

The segment at residues 57-76 (ERLVANAIGVPPEVIWAGRF) is a DNA-binding region (H-T-H motif).

This sequence belongs to the ner transcriptional regulatory family.

Functionally, negative regulator of transcription starting from the Pe and Pc promoters of Mu. Also negatively regulates its own gene transcription. This Haemophilus influenzae (strain ATCC 51907 / DSM 11121 / KW20 / Rd) protein is Mu-like prophage FluMu DNA-binding protein Ner (nlp).